The primary structure comprises 764 residues: Protein FAR1-RELATED SEQUENCE 7 (764 aa).

Residues 42 to 118 enclose the FAR1 1 domain; sequence DYYNSYATRT…QKEHNHDLGG (77 aa). The segment at 119 to 144 is disordered; that stretch reads HIEEAQTTPRPSVQQRAPAPTKLGIS. Positions 123-133 are enriched in polar residues; the sequence is AQTTPRPSVQQ. Residues 204–280 form the FAR1 2 domain; sequence QFYQAYAEVV…NKDHNHDLEP (77 aa). The 97-residue stretch at 375-471 folds into the MULE domain; that stretch reads AVVFDTSYRK…SAWQIRSKER (97 aa). The SWIM-type zinc-finger motif lies at 650-686; that stretch reads HAVTFSASNLNASCSCQMFEYEGLLCRHILKVFNLLD.

Belongs to the FHY3/FAR1 family. In terms of tissue distribution, expressed in hypocotyls, rosette and cauline leaves, inflorescences stems, flowers and siliques.

It localises to the nucleus. In terms of biological role, putative transcription activator involved in regulating light control of development. This Arabidopsis thaliana (Mouse-ear cress) protein is Protein FAR1-RELATED SEQUENCE 7 (FRS7).